The following is a 236-amino-acid chain: UPF0502 protein Bcep1808_3727 (236 aa).

This sequence belongs to the UPF0502 family.

The polypeptide is UPF0502 protein Bcep1808_3727 (Burkholderia vietnamiensis (strain G4 / LMG 22486) (Burkholderia cepacia (strain R1808))).